A 179-amino-acid polypeptide reads, in one-letter code: Cytochrome b6-f complex iron-sulfur subunit (179 aa).

Residues 20–42 (LLTFGTITGVAAGALYPIVKYFI) traverse the membrane as a helical segment. The Rieske domain occupies 60-161 (GNDVIVSQFL…ANVTDNDKVV (102 aa)). The [2Fe-2S] cluster site is built by cysteine 107, histidine 109, cysteine 125, and histidine 128. Cysteine 112 and cysteine 127 are disulfide-bonded.

It belongs to the Rieske iron-sulfur protein family. In terms of assembly, the 4 large subunits of the cytochrome b6-f complex are cytochrome b6, subunit IV (17 kDa polypeptide, PetD), cytochrome f and the Rieske protein, while the 4 small subunits are PetG, PetL, PetM and PetN. The complex functions as a dimer. [2Fe-2S] cluster serves as cofactor.

It localises to the cellular thylakoid membrane. The catalysed reaction is 2 oxidized [plastocyanin] + a plastoquinol + 2 H(+)(in) = 2 reduced [plastocyanin] + a plastoquinone + 4 H(+)(out). Functionally, component of the cytochrome b6-f complex, which mediates electron transfer between photosystem II (PSII) and photosystem I (PSI), cyclic electron flow around PSI, and state transitions. The polypeptide is Cytochrome b6-f complex iron-sulfur subunit (Microcystis aeruginosa (strain NIES-843 / IAM M-2473)).